The sequence spans 2326 residues: Nonribosomal peptide synthetase inpB (2326 aa).

The 77-residue stretch at 8–84 (SPSEWLQLEL…SLYSMAQGPA (77 aa)) folds into the Carrier 1 domain. Serine 45 is subject to O-(pantetheine 4'-phosphoryl)serine. Residues 87–121 (ASSSTSDNASDKDSSLDDSETGALTPTTDAGSSLA) are disordered. Residues 108-121 (GALTPTTDAGSSLA) show a composition bias toward polar residues. The segment at 144-568 (QAVVPCSAIQ…LLSPGEVSQL (425 aa)) is condensation 1. The adenylation 1 stretch occupies residues 593–997 (LQPGAAAVNS…GRRDTQVKIR (405 aa)). Positions 1145 to 1221 (EPSTETEFKL…DLARAVESRV (77 aa)) constitute a Carrier 2 domain. Serine 1182 carries the O-(pantetheine 4'-phosphoryl)serine modification. The tract at residues 1226 to 1247 (DEEDPAPFSVWRESRGSEPSEE) is disordered. The interval 1266 to 1680 (EDVLPCTALQ…LLSPEDVNQL (415 aa)) is condensation 2. Positions 1702-2097 (EVARSRPGAA…GRIDTQIKIR (396 aa)) are adenylation 2. The Carrier 3 domain occupies 2216 to 2294 (PPSTEMEKAL…DLAVLLEKRP (79 aa)). Residue serine 2253 is modified to O-(pantetheine 4'-phosphoryl)serine.

Belongs to the NRP synthetase family.

Its pathway is secondary metabolite biosynthesis. Nonribosomal peptide synthetase; part of the inp gene cluster that mediates the biosynthesis of fellutamide B, a mycotoxin that acts as a proteasome inhibitor. In the first step of fellutabmide B biosynthesis inpC activates 3-hydroxydodecanoic acid to generate 3-hydroxydodecanoyl-AMP that is then loaded onto the T0 domain of inpB. The 3-hydroxydodecanoyl-S-phosphopantetheinyl-T0 is sequentially extended with L-Asn and L-Gln by the two CAT modules of inpB. The linear lipodipeptide from inpB is then transferred onto inpA for the addition of the third amino acid, L-Leu. Reductive releasing of the lipotripeptide by the TE domain of inpA produces (2S)-fellutamide B. InpF might be involved in the release and transfer of the lipodipeptide from inpB to inpA. The inp cluster-encoded proteasome subunit inpE confers resistance to internally produced fellutamides. The MFS efflux transporter inpD may contribute to fellutamide resistance as well. The sequence is that of Nonribosomal peptide synthetase inpB from Emericella nidulans (strain FGSC A4 / ATCC 38163 / CBS 112.46 / NRRL 194 / M139) (Aspergillus nidulans).